The following is a 382-amino-acid chain: Putative phospholipase A1 (382 aa).

A signal peptide spans 1–27 (MPTMGAEMNTRNMRYILLTGLLPMASA). Residues 28-65 (FGETALQCAALTDNVTRLACYDRIFAAQLPSSAGQEGQ) lie on the Periplasmic side of the membrane. A beta stranded membrane pass occupies residues 66–78 (ESKAVLNLTETVR). Over 79–168 (SSLDKGEAVI…VQEKFGQQKR (90 aa)) the chain is Extracellular. A beta stranded transmembrane segment spans residues 169–183 (AETKLQVSFKSKIAE). Over 184-189 (DLFKTR) the chain is Periplasmic. Residues 190-202 (ADLWFGYTQRSDW) traverse the membrane as a beta stranded segment. The Extracellular portion of the chain corresponds to 203–213 (QIYNQGRKSAP). Serine 211 is a Ca(2+) binding site. The beta stranded transmembrane segment at 214 to 233 (FRNTDYKPEIFLTQPVKADL) threads the bilayer. Residues 234-236 (PFG) lie on the Periplasmic side of the membrane. Residues 237–250 (GRLRMLGAGFVHQS) form a beta stranded membrane-spanning segment. Catalysis depends on histidine 248, which acts as the Proton acceptor. The active-site Nucleophile is serine 250. Residues 251–259 (NGQSRPESR) are Extracellular-facing. A Ca(2+)-binding site is contributed by serine 258. The chain crosses the membrane as a beta stranded span at residues 260 to 272 (SWNRIYAMAGMEW). At 273–274 (GK) the chain is on the periplasmic side. Residues 275 to 284 (LTVIPRVWVR) form a beta stranded membrane-spanning segment. At 285–306 (AFDQSGDKNDNPDIADYMGYGD) the chain is on the extracellular side. Aspartate 294 serves as a coordination point for Ca(2+). Residues 307–313 (VKLQYRL) form a beta stranded membrane-spanning segment. The Periplasmic segment spans residues 314 to 315 (ND). The chain crosses the membrane as a beta stranded span at residues 316 to 325 (RQNVYSVLRY). Topologically, residues 326–332 (NPKTGYG) are extracellular. The chain crosses the membrane as a beta stranded span at residues 333-341 (AIEAAYTFP). Residues 342–346 (IKGKL) lie on the Periplasmic side of the membrane. The chain crosses the membrane as a beta stranded span at residues 347 to 356 (KGVVRGFHGY). Topologically, residues 357–365 (GESLIDYNH) are extracellular. A beta stranded membrane pass occupies residues 366–377 (KQNGIGIGLMFN). Topologically, residues 378-382 (DLDGI) are periplasmic.

The protein belongs to the phospholipase A1 family. As to quaternary structure, homodimer; dimerization is reversible, and the dimeric form is the active one. Ca(2+) serves as cofactor.

The protein localises to the cell outer membrane. The catalysed reaction is a 1,2-diacyl-sn-glycero-3-phosphocholine + H2O = a 2-acyl-sn-glycero-3-phosphocholine + a fatty acid + H(+). The enzyme catalyses a 1,2-diacyl-sn-glycero-3-phosphocholine + H2O = a 1-acyl-sn-glycero-3-phosphocholine + a fatty acid + H(+). Hydrolysis of phosphatidylcholine with phospholipase A2 (EC 3.1.1.4) and phospholipase A1 (EC 3.1.1.32) activities. The chain is Putative phospholipase A1 from Neisseria meningitidis serogroup B (strain ATCC BAA-335 / MC58).